A 124-amino-acid polypeptide reads, in one-letter code: Insulin-like growth factor 1 (124 aa).

Positions 1–19 are excised as a propeptide; the sequence is IHFFYLGLCLLTLTSSAAA. The tract at residues 20–48 is b; it reads GPETLCGAELVDALQFVCGDRGFYFSKPT. 3 cysteine pairs are disulfide-bonded: Cys-25–Cys-67, Cys-37–Cys-80, and Cys-66–Cys-71. The c stretch occupies residues 49–60; that stretch reads GYGSSSRRLHHK. Positions 61–81 are a; sequence GIVDECCFQSCDLRRLEMYCA. Residues 82-89 are d; sequence PIKPPKSA. The interval 86–124 is disordered; that stretch reads PKSARSVRAQRHTDMPKAQKEVHLKNTSRGNTGNRNYRM. The propeptide at 90–124 is e peptide; the sequence is RSVRAQRHTDMPKAQKEVHLKNTSRGNTGNRNYRM. The span at 96 to 109 shows a compositional bias: basic and acidic residues; it reads RHTDMPKAQKEVHL. Over residues 110–124 the composition is skewed to polar residues; that stretch reads KNTSRGNTGNRNYRM.

This sequence belongs to the insulin family.

The protein resides in the secreted. Its function is as follows. The insulin-like growth factors, isolated from plasma, are structurally and functionally related to insulin but have a much higher growth-promoting activity. Acts as a ligand for IGF1R. Binds to the alpha subunit of IGF1R, leading to the activation of the intrinsic tyrosine kinase activity which autophosphorylates tyrosine residues in the beta subunit thus initiatiating a cascade of down-stream signaling events leading to activation of the PI3K-AKT/PKB and the Ras-MAPK pathways. Binds to integrins. Its binding to integrins and subsequent ternary complex formation with integrins and IGFR1 are essential for IGF1 signaling. This chain is Insulin-like growth factor 1, found in Coturnix japonica (Japanese quail).